The chain runs to 199 residues: Superoxide dismutase [Mn] (199 aa).

Residues His27, His76, Asp160, and His164 each coordinate Mn(2+).

It belongs to the iron/manganese superoxide dismutase family. Requires Mn(2+) as cofactor.

It carries out the reaction 2 superoxide + 2 H(+) = H2O2 + O2. Destroys superoxide anion radicals which are normally produced within the cells and which are toxic to biological systems. The protein is Superoxide dismutase [Mn] (sodA) of Corynebacterium diphtheriae (strain ATCC 700971 / NCTC 13129 / Biotype gravis).